Reading from the N-terminus, the 431-residue chain is UDP-N-acetylmuramate--L-alanine ligase (431 aa).

Position 108–114 (108–114) interacts with ATP; sequence GSHGKTS.

The protein belongs to the MurCDEF family.

Its subcellular location is the cytoplasm. The enzyme catalyses UDP-N-acetyl-alpha-D-muramate + L-alanine + ATP = UDP-N-acetyl-alpha-D-muramoyl-L-alanine + ADP + phosphate + H(+). The protein operates within cell wall biogenesis; peptidoglycan biosynthesis. In terms of biological role, cell wall formation. The sequence is that of UDP-N-acetylmuramate--L-alanine ligase from Macrococcus caseolyticus (strain JCSC5402) (Macrococcoides caseolyticum).